Consider the following 530-residue polypeptide: Testis-expressed protein 44 (530 aa).

The segment covering 1 to 10 (MTAEPLEDPE) has biased composition (acidic residues). Disordered regions lie at residues 1–85 (MTAE…FIRT), 207–233 (ATSAVKDESPDIPHQGQDNPEETTSLL), 256–290 (ENNRTSRSRTVSPSDSQTQEKTLGNPNVPEGQPVL), and 305–384 (QTSV…SPDF). Polar residues-rich tracts occupy residues 11–26 (ASSSSTHDLPEASSDN), 222–233 (GQDNPEETTSLL), and 257–280 (NNRTSRSRTVSPSDSQTQEKTLGN). Positions 365–381 (PPDPPDPGSPGGSPPHS) are enriched in pro residues. Ser-468 carries the post-translational modification Phosphoserine.

The protein localises to the cytoplasm. In Mus musculus (Mouse), this protein is Testis-expressed protein 44 (Tex44).